Reading from the N-terminus, the 54-residue chain is Photosystem II reaction center protein K (54 aa).

A propeptide spanning residues 1–17 is cleaved from the precursor; the sequence is MSFITLNNFFNTNTFFG. A helical transmembrane segment spans residues 29–49; sequence LIDVLPIIPVLFFLLAFVWQA.

It belongs to the PsbK family. PSII is composed of 1 copy each of membrane proteins PsbA, PsbB, PsbC, PsbD, PsbE, PsbF, PsbH, PsbI, PsbJ, PsbK, PsbL, PsbM, PsbT, PsbY, PsbZ, Psb30/Ycf12, at least 3 peripheral proteins of the oxygen-evolving complex and a large number of cofactors. It forms dimeric complexes.

It is found in the plastid. The protein resides in the chloroplast thylakoid membrane. One of the components of the core complex of photosystem II (PSII). PSII is a light-driven water:plastoquinone oxidoreductase that uses light energy to abstract electrons from H(2)O, generating O(2) and a proton gradient subsequently used for ATP formation. It consists of a core antenna complex that captures photons, and an electron transfer chain that converts photonic excitation into a charge separation. The chain is Photosystem II reaction center protein K from Euglena gracilis.